The following is a 453-amino-acid chain: Insulinoma-associated protein 1b (453 aa).

Residues 1 to 20 (MPKGFLVKRNKKAALVSYRI) form an SNAG domain region. Residues 140–179 (NSNRSGTASGAHAPAIQTGAKRPSADAAERKVSSKSAKKP) are disordered. Positions 162–171 (PSADAAERKV) are enriched in basic and acidic residues. The segment at 252-274 (YRCPECEKVFSCPANLASHRRWH) adopts a C2H2-type 1 zinc-finger fold. Residues 298–318 (AEFPSDRDTPSPGLSESGSED) are disordered. 3 C2H2-type zinc fingers span residues 321 to 343 (YDCQ…ILGH), 383 to 406 (LTCP…RLLH), and 412 to 435 (FPCK…NKCH).

The protein belongs to the INSM1 family.

It localises to the nucleus. May act as a transcriptional regulator. May play a role in neurogenesis and neuroendocrine cell differentiation during embryonic development. This chain is Insulinoma-associated protein 1b (insm1b), found in Danio rerio (Zebrafish).